Reading from the N-terminus, the 299-residue chain is Ankyrin repeat domain-containing protein 54 (299 aa).

The interval methionine 1–glycine 32 is disordered. Position 2 is an N-acetylalanine (alanine 2). Serine 57 and serine 62 each carry phosphoserine. The Nuclear localization signal (NLS) signature appears at arginine 98–serine 116. 4 ANK repeats span residues histidine 108–alanine 137, lysine 141–glutamine 170, leucine 174–alanine 203, and alanine 207–glutamine 239. Residues aspartate 140–isoleucine 240 form an LYN-binding region. Positions leucine 282–glutamine 292 match the Nuclear export signal (NES) motif.

As to quaternary structure, interacts (via ankyrin repeat region) with LYN (via SH3-domain) in an activation-independent status of LYN. Forms a multiprotein complex with LYN and HCLS1. Interacts with TSN2, VAV1, DBNL and LASP1.

It localises to the nucleus. The protein resides in the cytoplasm. Its subcellular location is the midbody. Functionally, plays an important role in regulating intracellular signaling events associated with erythroid terminal differentiation. In Bos taurus (Bovine), this protein is Ankyrin repeat domain-containing protein 54 (ANKRD54).